Consider the following 178-residue polypeptide: ATP synthase subunit delta (178 aa).

This sequence belongs to the ATPase delta chain family. F-type ATPases have 2 components, F(1) - the catalytic core - and F(0) - the membrane proton channel. F(1) has five subunits: alpha(3), beta(3), gamma(1), delta(1), epsilon(1). F(0) has three main subunits: a(1), b(2) and c(10-14). The alpha and beta chains form an alternating ring which encloses part of the gamma chain. F(1) is attached to F(0) by a central stalk formed by the gamma and epsilon chains, while a peripheral stalk is formed by the delta and b chains.

Its subcellular location is the cell membrane. Its function is as follows. F(1)F(0) ATP synthase produces ATP from ADP in the presence of a proton or sodium gradient. F-type ATPases consist of two structural domains, F(1) containing the extramembraneous catalytic core and F(0) containing the membrane proton channel, linked together by a central stalk and a peripheral stalk. During catalysis, ATP synthesis in the catalytic domain of F(1) is coupled via a rotary mechanism of the central stalk subunits to proton translocation. This protein is part of the stalk that links CF(0) to CF(1). It either transmits conformational changes from CF(0) to CF(1) or is implicated in proton conduction. This chain is ATP synthase subunit delta, found in Streptococcus pyogenes serotype M3 (strain SSI-1).